The chain runs to 85 residues: COMM domain-containing protein 6 (85 aa).

The residue at position 1 (methionine 1) is an N-acetylmethionine. The COMM domain occupies 18–85; it reads QLIDFEWKLG…KEIAAIIETV (68 aa).

Belongs to the COMM domain-containing protein 6 family. Component of the commander complex consisting of the CCC subcomplex and the retriever subcomplex. Component of the CCC (COMMD/CCDC22/CCDC93) subcomplex consisting of COMMD1, COMMD2, COMMD3, COMMD4, COMMD5, COMMD6, COMMD7, COMMD8, COMMD9, COMMD10, CCDC22 and CCDC93; within the complex forms a heterodimer with COMMD1. May form a homodimer with isoform 1. Interacts with RELA, RELB, NFKB1/p105. Does not interact with NFKBIB. Interacts with CCDC22, CCDC93, SCNN1B, CUL4A.

It is found in the nucleus. It localises to the cytoplasm. Functionally, scaffold protein in the commander complex that is essential for endosomal recycling of transmembrane cargos; the commander complex is composed of the CCC subcomplex and the retriever subcomplex. May modulate activity of cullin-RING E3 ubiquitin ligase (CRL) complexes. Down-regulates activation of NF-kappa-B. Inhibits TNF-induced NFKB1 activation. In Bos taurus (Bovine), this protein is COMM domain-containing protein 6 (COMMD6).